We begin with the raw amino-acid sequence, 361 residues long: Phospho-N-acetylmuramoyl-pentapeptide-transferase (361 aa).

Helical transmembrane passes span 27–47, 70–90, 97–117, 134–154, 167–187, 199–219, 236–256, 263–283, 288–308, and 338–358; these read ILAS…MIRW, GTPT…CLLW, SLWL…VDDY, YFWQ…NASL, TVTW…IVGS, GLAI…AYAS, TGEL…FLWY, VFMG…VAIV, LVLL…ILQV, and KVIV…LATL.

This sequence belongs to the glycosyltransferase 4 family. MraY subfamily. The cofactor is Mg(2+).

The protein resides in the cell inner membrane. It catalyses the reaction UDP-N-acetyl-alpha-D-muramoyl-L-alanyl-gamma-D-glutamyl-meso-2,6-diaminopimeloyl-D-alanyl-D-alanine + di-trans,octa-cis-undecaprenyl phosphate = di-trans,octa-cis-undecaprenyl diphospho-N-acetyl-alpha-D-muramoyl-L-alanyl-D-glutamyl-meso-2,6-diaminopimeloyl-D-alanyl-D-alanine + UMP. It functions in the pathway cell wall biogenesis; peptidoglycan biosynthesis. Functionally, catalyzes the initial step of the lipid cycle reactions in the biosynthesis of the cell wall peptidoglycan: transfers peptidoglycan precursor phospho-MurNAc-pentapeptide from UDP-MurNAc-pentapeptide onto the lipid carrier undecaprenyl phosphate, yielding undecaprenyl-pyrophosphoryl-MurNAc-pentapeptide, known as lipid I. This chain is Phospho-N-acetylmuramoyl-pentapeptide-transferase, found in Legionella pneumophila (strain Paris).